Reading from the N-terminus, the 249-residue chain is uncharacterized protein (249 aa).

Residues 1–43 (MRRGRSRPAGAAPAALLLPLLLLLPLTGCDRLAAAPAEHAAAA) form the signal peptide. Residues 40-59 (AAAAGDPAQDADRGRRLPPV) form a disordered region. A NodB homology domain is found at 68–243 (PVVFLTYDDG…TIEEQGLRVG (176 aa)).

This is an uncharacterized protein from Streptomyces coelicolor (strain ATCC BAA-471 / A3(2) / M145).